Consider the following 314-residue polypeptide: Glycine--tRNA ligase alpha subunit (314 aa).

It belongs to the class-II aminoacyl-tRNA synthetase family. In terms of assembly, tetramer of two alpha and two beta subunits.

The protein localises to the cytoplasm. The catalysed reaction is tRNA(Gly) + glycine + ATP = glycyl-tRNA(Gly) + AMP + diphosphate. The protein is Glycine--tRNA ligase alpha subunit of Mesorhizobium japonicum (strain LMG 29417 / CECT 9101 / MAFF 303099) (Mesorhizobium loti (strain MAFF 303099)).